Reading from the N-terminus, the 1585-residue chain is Maestro heat-like repeat-containing protein family member 2B (1585 aa).

HEAT repeat units lie at residues 28-65 (VNKE…DMRD), 228-263 (GYAL…AAVL), 272-309 (LRRS…LAHS), 310-346 (NPGE…ADEP), 405-445 (TLNR…LVIG), 531-569 (IGLL…STVL), 572-611 (TMLL…NSTE), 662-699 (ENHL…LTKT), 777-819 (SYKE…LKPQ), 964-1001 (HLEV…KFIP), 1021-1059 (PTCT…HMPV), 1112-1151 (ASSG…VISM), 1157-1195 (GLYP…QGEQ), 1258-1295 (GVIL…EPIL), and 1363-1402 (CESL…EQDD).

In terms of assembly, found in a complex at least composed of MROH2B, PRKACA isoform 2 and TCP11. Interacts with PRKACA. Interacts with TCP11. Constitutively phosphorylated on serine and threonine residues in acrosomal region of the sperm head, midpiece and flagellar regions of noncapacitated spermatozoa. Phosphorylation on tyrosine residues increases upon sperm capacitation within the acrosomal and tail regions in a protein kinase A (PKA)-dependent signaling pathway.

Its subcellular location is the cytoplasm. It is found in the cytoplasmic vesicle. The protein localises to the secretory vesicle. It localises to the acrosome. The protein resides in the cell projection. Its subcellular location is the cilium. It is found in the flagellum. May play a role in the process of sperm capacitation. In Homo sapiens (Human), this protein is Maestro heat-like repeat-containing protein family member 2B.